The primary structure comprises 92 residues: Acyl-CoA-binding protein (92 aa).

Residues 3–88 (LKEDFEEHAE…VKQLLEAEAS (86 aa)) enclose the ACB domain. Residues 30–34 (YGLYK), K56, and Y75 each bind an acyl-CoA.

This sequence belongs to the ACBP family.

In terms of biological role, binds medium- and long-chain acyl-CoA esters with very high affinity and may function as an intracellular carrier of acyl-CoA esters. In Brassica napus (Rape), this protein is Acyl-CoA-binding protein.